A 226-amino-acid polypeptide reads, in one-letter code: Enolase-phosphatase E1 (226 aa).

It belongs to the HAD-like hydrolase superfamily. MasA/MtnC family. As to quaternary structure, monomer. It depends on Mg(2+) as a cofactor.

It catalyses the reaction 5-methylsulfanyl-2,3-dioxopentyl phosphate + H2O = 1,2-dihydroxy-5-(methylsulfanyl)pent-1-en-3-one + phosphate. It participates in amino-acid biosynthesis; L-methionine biosynthesis via salvage pathway; L-methionine from S-methyl-5-thio-alpha-D-ribose 1-phosphate: step 3/6. The protein operates within amino-acid biosynthesis; L-methionine biosynthesis via salvage pathway; L-methionine from S-methyl-5-thio-alpha-D-ribose 1-phosphate: step 4/6. Its function is as follows. Bifunctional enzyme that catalyzes the enolization of 2,3-diketo-5-methylthiopentyl-1-phosphate (DK-MTP-1-P) into the intermediate 2-hydroxy-3-keto-5-methylthiopentenyl-1-phosphate (HK-MTPenyl-1-P), which is then dephosphorylated to form the acireductone 1,2-dihydroxy-3-keto-5-methylthiopentene (DHK-MTPene). The sequence is that of Enolase-phosphatase E1 from Shewanella putrefaciens (strain CN-32 / ATCC BAA-453).